Reading from the N-terminus, the 416-residue chain is Serine/threonine-protein phosphatase PP2A-like PPG1 (416 aa).

Residues aspartate 62, histidine 64, aspartate 90, and asparagine 122 each coordinate Mn(2+). Catalysis depends on histidine 123, which acts as the Proton donor. Residues histidine 173 and histidine 248 each coordinate Mn(2+). Residues 363–391 form a disordered region; that stretch reads EDTLQGKSVNGINFDDELSTSDDTSGSGG.

The protein belongs to the PPP phosphatase family. PP-2A subfamily. It depends on Mn(2+) as a cofactor.

The enzyme catalyses O-phospho-L-seryl-[protein] + H2O = L-seryl-[protein] + phosphate. It carries out the reaction O-phospho-L-threonyl-[protein] + H2O = L-threonyl-[protein] + phosphate. Its activity is regulated as follows. Inhibited by okadaic acid, a specific inhibitor of serine/threonine phosphatases of types 1, 2A and 2B. Functionally, serine/threonine-protein phosphatase that plays an important role in controlling colony morphology, filament extension and agar invasion. Down-regulates expression of NRG1 and affects the expression of multiple filament-specific transcripts in response to serum and 37 degrees Celsius. Plays a crucial role in virulence in a mouse model of systemic candidiasis. The sequence is that of Serine/threonine-protein phosphatase PP2A-like PPG1 from Candida albicans (strain SC5314 / ATCC MYA-2876) (Yeast).